The sequence spans 417 residues: Serine hydroxymethyltransferase (417 aa).

(6S)-5,6,7,8-tetrahydrofolate-binding positions include L121 and 125–127; that span reads GHL. K229 carries the post-translational modification N6-(pyridoxal phosphate)lysine. Residue 355-357 coordinates (6S)-5,6,7,8-tetrahydrofolate; sequence SPF.

It belongs to the SHMT family. Homodimer. It depends on pyridoxal 5'-phosphate as a cofactor.

Its subcellular location is the cytoplasm. It carries out the reaction (6R)-5,10-methylene-5,6,7,8-tetrahydrofolate + glycine + H2O = (6S)-5,6,7,8-tetrahydrofolate + L-serine. It participates in one-carbon metabolism; tetrahydrofolate interconversion. The protein operates within amino-acid biosynthesis; glycine biosynthesis; glycine from L-serine: step 1/1. In terms of biological role, catalyzes the reversible interconversion of serine and glycine with tetrahydrofolate (THF) serving as the one-carbon carrier. This reaction serves as the major source of one-carbon groups required for the biosynthesis of purines, thymidylate, methionine, and other important biomolecules. Also exhibits THF-independent aldolase activity toward beta-hydroxyamino acids, producing glycine and aldehydes, via a retro-aldol mechanism. The polypeptide is Serine hydroxymethyltransferase (Buchnera aphidicola subsp. Acyrthosiphon pisum (strain APS) (Acyrthosiphon pisum symbiotic bacterium)).